Reading from the N-terminus, the 829-residue chain is Leucine--tRNA ligase (829 aa).

The short motif at 42–52 (PYPSGNLHMGH) is the 'HIGH' region element. Positions 582 to 586 (KMSKS) match the 'KMSKS' region motif. Lysine 585 lines the ATP pocket.

It belongs to the class-I aminoacyl-tRNA synthetase family.

Its subcellular location is the cytoplasm. It catalyses the reaction tRNA(Leu) + L-leucine + ATP = L-leucyl-tRNA(Leu) + AMP + diphosphate. This Moorella thermoacetica (strain ATCC 39073 / JCM 9320) protein is Leucine--tRNA ligase.